A 385-amino-acid chain; its full sequence is Serine/threonine-protein kinase H2 (385 aa).

A Protein kinase domain is found at 63 to 320; the sequence is YDIKALIGTG…AGQALDHPWV (258 aa). Residues 69–77 and K92 each bind ATP; that span reads IGTGSFSRV. A disordered region spans residues 342 to 367; it reads QRASPHSQSPGSAQSSKSHYSHKSRH. The span at 344 to 359 shows a compositional bias: low complexity; that stretch reads ASPHSQSPGSAQSSKS.

This sequence belongs to the protein kinase superfamily. CAMK Ser/Thr protein kinase family.

It carries out the reaction L-seryl-[protein] + ATP = O-phospho-L-seryl-[protein] + ADP + H(+). The enzyme catalyses L-threonyl-[protein] + ATP = O-phospho-L-threonyl-[protein] + ADP + H(+). In Homo sapiens (Human), this protein is Serine/threonine-protein kinase H2 (PSKH2).